A 484-amino-acid polypeptide reads, in one-letter code: MTKAIMLQGTGSDVGKTVLVAGLCRLFANRGVRVRPFKPQNMSNNAAVAEDGGEIGRAQWLQSLAARVPSSVHMNPVLLKPQSETGSQIIVQGKVWGHAKGRDYQALKPQLLGAVLESFATMRAGTDLVIVEGAGSPAEINLRQGDIANMGFATRANVPVVLVGDIDRGGVIASLVGTYHILPEEDRRMIRGYIINKFRGDVSLFGTGIEAIGGFTGWPCHGIVPWLKAAGRLPPEDSVVLERLARGSDGALKIAVPVLPRIANFDDFDPLRAEPDVDLVFVRAGERLPADAGLVILPGSKSTIGDLMDLRAQGWDRDITAHVRRGGRVIGICGGYQMLGRMVHDPLGIEGSVTETPGLGLLDVETEMAPEKTVRNSTALSTEYDAPLSGYEIHLGVTRGKDCDRPSTVIDGRPDGARSGDGLIMGTYLHGLFCSDAYRAKLLASFGLSGERMDYRASVETALDEIATELEAVLDPAWLDSLAG.

Residues 251 to 438 enclose the GATase cobBQ-type domain; sequence ALKIAVPVLP…LHGLFCSDAY (188 aa). Catalysis depends on C333, which acts as the Nucleophile. Residue H430 is part of the active site.

The protein belongs to the CobB/CobQ family. CobQ subfamily.

The protein operates within cofactor biosynthesis; adenosylcobalamin biosynthesis. In terms of biological role, catalyzes amidations at positions B, D, E, and G on adenosylcobyrinic A,C-diamide. NH(2) groups are provided by glutamine, and one molecule of ATP is hydrogenolyzed for each amidation. This is Cobyric acid synthase from Rhizobium rhizogenes (strain K84 / ATCC BAA-868) (Agrobacterium radiobacter).